Consider the following 992-residue polypeptide: Vacuolar membrane protease (992 aa).

The Cytoplasmic portion of the chain corresponds to 1-24; sequence MSPAMANPRVRKFNPIAFTPLPVT. The helical transmembrane segment at 25–45 threads the bilayer; sequence FITTIVYLAVLILVLVTYLVV. Residues 46 to 390 are Vacuolar-facing; that stretch reads PPAPTLEMSP…SAFAVFRLHT (345 aa). Asparagine 59, asparagine 115, and asparagine 118 each carry an N-linked (GlcNAc...) asparagine glycan. The Zn(2+) site is built by histidine 174 and aspartate 186. Glutamate 220 (proton acceptor) is an active-site residue. Glutamate 221 is a binding site for Zn(2+). The N-linked (GlcNAc...) asparagine glycan is linked to asparagine 237. Residues glutamate 246 and histidine 319 each coordinate Zn(2+). The chain crosses the membrane as a helical span at residues 391 to 411; that stretch reads LFALSVTLLVIGPLVLFITSI. The Cytoplasmic segment spans residues 412–446; sequence ALSKTDRMYLFSMSKSLGGASETVSLRGLRGLFRT. The chain crosses the membrane as a helical span at residues 447-467; the sequence is PIILTVTTVIPIGLAYLLEKI. Residues 468–474 are Vacuolar-facing; the sequence is NPYIVHS. Residues 475-495 traverse the membrane as a helical segment; that stretch reads SQFAVWSMMLSVWIFVAWFLA. Residues 496–508 lie on the Cytoplasmic side of the membrane; that stretch reads RVADFFRPSALHR. The helical transmembrane segment at 509–529 threads the bilayer; that stretch reads AYSYTWIFIVTWIMLVISTVY. The Vacuolar segment spans residues 530–533; the sequence is ANQK. A helical transmembrane segment spans residues 534-554; the sequence is GIAAGYFTFFYFAAVFLATWV. Topologically, residues 555–671 are cytoplasmic; the sequence is SYLELFSLPR…WSWTLPRWTW (117 aa). The segment at 579–620 is disordered; it reads RSSSLSSRLLTPSADELPSDIGPNGAENVGDPDETDPTESTS. A helical membrane pass occupies residues 672–692; the sequence is ILQLLLLAPIVIILVGQVGLL. At 693-708 the chain is on the vacuolar side; it reads LTTAMSQIGSDGVSTF. The helical transmembrane segment at 709-729 threads the bilayer; the sequence is IVYLACALFSTLLFAPLLPFI. At 730–736 the chain is on the cytoplasmic side; sequence HRFTYHV. The helical transmembrane segment at 737–757 threads the bilayer; it reads PTFLLLIFIGTLIYNLVAFPF. Residues 758–992 lie on the Vacuolar side of the membrane; it reads SPANRLKIFF…VEASHDFIIQ (235 aa). N-linked (GlcNAc...) asparagine glycosylation is found at asparagine 805, asparagine 846, and asparagine 954.

This sequence belongs to the peptidase M28 family. Zn(2+) serves as cofactor.

It localises to the vacuole membrane. In terms of biological role, may be involved in vacuolar sorting and osmoregulation. In Paracoccidioides brasiliensis (strain Pb03), this protein is Vacuolar membrane protease.